We begin with the raw amino-acid sequence, 400 residues long: Diphosphomevalonate decarboxylase (400 aa).

Alanine 2 bears the N-acetylalanine mark. (R)-5-diphosphomevalonate contacts are provided by residues 23-26 and arginine 78; that span reads YWGK. Serine 96 is subject to Phosphoserine. Residues 156 to 161 and threonine 212 contribute to the (R)-5-diphosphomevalonate site; that span reads SGSACR.

This sequence belongs to the diphosphomevalonate decarboxylase family. As to quaternary structure, homodimer. In terms of tissue distribution, expressed in heart, skeletal muscle, lung, liver, brain, pancreas, kidney and placenta.

Its subcellular location is the cytoplasm. It catalyses the reaction (R)-5-diphosphomevalonate + ATP = isopentenyl diphosphate + ADP + phosphate + CO2. It functions in the pathway steroid biosynthesis; cholesterol biosynthesis. In terms of biological role, catalyzes the ATP dependent decarboxylation of (R)-5-diphosphomevalonate to form isopentenyl diphosphate (IPP). Functions in the mevalonate (MVA) pathway leading to isopentenyl diphosphate (IPP), a key precursor for the biosynthesis of isoprenoids and sterol synthesis. The sequence is that of Diphosphomevalonate decarboxylase (MVD) from Homo sapiens (Human).